The chain runs to 130 residues: Protein ApaG (130 aa).

One can recognise an ApaG domain in the interval 3 to 127; that stretch reads RAVTRQIEVT…FSLDSPDNKR (125 aa).

The polypeptide is Protein ApaG (Bradyrhizobium diazoefficiens (strain JCM 10833 / BCRC 13528 / IAM 13628 / NBRC 14792 / USDA 110)).